The primary structure comprises 230 residues: Orotidine 5'-phosphate decarboxylase (230 aa).

Residues Asp11, Lys34, 61 to 70 (DLKLHDIPNT), Thr117, Arg179, Gln188, Gly208, and Arg209 each bind substrate. Lys63 functions as the Proton donor in the catalytic mechanism.

It belongs to the OMP decarboxylase family. Type 1 subfamily. As to quaternary structure, homodimer.

It catalyses the reaction orotidine 5'-phosphate + H(+) = UMP + CO2. The protein operates within pyrimidine metabolism; UMP biosynthesis via de novo pathway; UMP from orotate: step 2/2. Its function is as follows. Catalyzes the decarboxylation of orotidine 5'-monophosphate (OMP) to uridine 5'-monophosphate (UMP). This Streptococcus equi subsp. zooepidemicus (strain H70) protein is Orotidine 5'-phosphate decarboxylase.